Reading from the N-terminus, the 560-residue chain is MADNLRKLVSTESLRSMQDKLENWLREYNNNSCDQNLNYCLELIEQVAKVQGQLFGILTTAAQEGGHYDGVETIKSRLLPWLEASFTAASLGKPVDSKIPSLQDTFDKERQKESVIRDRNIHQLDADLNTTRNQLNQVQDDLAETEKTLEETKNRSAISLLAAEEEINQLRKQLKCLQAQEESRHRPPEHRSSEKRGSERRRVEPRGADRCGAAQRKAEEICDYEKQLRTLKDEIAVLSAEKSVLQGRSTRSRSPSPASCSRSRSHSHSRSRSHSHSRSGSHSRSHSRNHSRSRSASPSTAVSGVRSPSPNRAKLSSVARKAALLSRFSDAYSQARLDAQCLLRRCIDKAETVQRIIYIATVEAFHVAKMAFRHFKIRVRKSLTPSYAGSNDFEDAVLDYIICHLDLYDSQSSVNDVIRAMNVNPKISFPPEVDFCLLSNFIQEICCIAFAMQTLDPPLDIAFGADGEIFNDCKYRRSYDSDFTAPLVFYHVWPALMENDCVIMKGEAVTRRGAFWNSVRSVTRCRSRSLSPICPRSRVGLSTISRSRSPSPIRCGLPRF.

Residues 1–294 (MADNLRKLVS…SHSRNHSRSR (294 aa)) are interaction with YWHAG/14-3-3 protein gamma. Phosphoserine is present on residues Ser13, Ser85, Ser156, and Ser159. Coiled coils occupy residues 118–186 (DRNI…SRHR) and 223–248 (DYEK…LQGR). 2 disordered regions span residues 178–217 (QAQE…AQRK) and 243–316 (SVLQ…AKLS). Residues 181–209 (EESRHRPPEHRSSEKRGSERRRVEPRGAD) are compositionally biased toward basic and acidic residues. The span at 248–262 (RSTRSRSPSPASCSR) shows a compositional bias: low complexity. Residues 263–293 (SRSHSHSRSRSHSHSRSGSHSRSHSRNHSRS) are compositionally biased toward basic residues. The span at 300–310 (TAVSGVRSPSP) shows a compositional bias: polar residues. Ser307, Ser309, and Ser531 each carry phosphoserine.

The protein belongs to the MIEAP family. Interacts (via coiled-coil domains) with BNIP3L (via BH3 domain). Interacts (via coiled-coil domains) with BNIP3 (via BH3 domain). Interacts with YWHAG/14-3-3 protein gamma; a protein that also plays a role in MALM.

The protein localises to the cytoplasm. The protein resides in the cytosol. Its subcellular location is the mitochondrion outer membrane. It localises to the mitochondrion matrix. In terms of biological role, key regulator of mitochondrial quality that mediates the repairing or degradation of unhealthy mitochondria in response to mitochondrial damage. Mediator of mitochondrial protein catabolic process (also named MALM) by mediating the degradation of damaged proteins inside mitochondria by promoting the accumulation in the mitochondrial matrix of hydrolases that are characteristic of the lysosomal lumen. Also involved in mitochondrion degradation of damaged mitochondria by promoting the formation of vacuole-like structures (named MIV), which engulf and degrade unhealthy mitochondria by accumulating lysosomes. The physical interaction of SPATA18/MIEAP, BNIP3 and BNIP3L/NIX at the mitochondrial outer membrane regulates the opening of a pore in the mitochondrial double membrane in order to mediate the translocation of lysosomal proteins from the cytoplasm to the mitochondrial matrix. Binds cardiolipin. May form molecular condensates (non-membrane-bounded organelles) within mitochondria that compartmentalize and promote cardiolipin metabolism. The polypeptide is Mitochondria-eating protein (SPATA18) (Sus scrofa (Pig)).